Here is a 554-residue protein sequence, read N- to C-terminus: Urocanate hydratase (554 aa).

Residues 52 to 53 (GG), Q130, 176 to 178 (GMG), E196, R201, 242 to 243 (NA), 263 to 267 (QTSAH), 273 to 274 (YL), and Y322 contribute to the NAD(+) site. C410 is a catalytic residue. Position 492 (G492) interacts with NAD(+).

Belongs to the urocanase family. The cofactor is NAD(+).

The protein localises to the cytoplasm. It carries out the reaction 4-imidazolone-5-propanoate = trans-urocanate + H2O. It functions in the pathway amino-acid degradation; L-histidine degradation into L-glutamate; N-formimidoyl-L-glutamate from L-histidine: step 2/3. Its function is as follows. Catalyzes the conversion of urocanate to 4-imidazolone-5-propionate. The polypeptide is Urocanate hydratase (Shewanella halifaxensis (strain HAW-EB4)).